Consider the following 245-residue polypeptide: Putative [LysW]-aminoadipate/[LysW]-glutamate kinase (245 aa).

Substrate-binding residues include Arg-60 and Asn-162.

The protein belongs to the acetylglutamate kinase family. LysZ subfamily.

The protein localises to the cytoplasm. The enzyme catalyses [amino-group carrier protein]-C-terminal-N-(1,4-dicarboxybutan-1-yl)-L-glutamine + ATP = [amino-group carrier protein]-C-terminal-N-(1-carboxy-5-phosphooxy-5-oxopentan-1-yl)-L-glutamine + ADP. It catalyses the reaction [amino-group carrier protein]-C-terminal-gamma-(L-glutamyl)-L-glutamate + ATP = [amino-group carrier protein]-C-terminal-gamma-(5-phospho-L-glutamyl)-L-glutamate + ADP. Its pathway is amino-acid biosynthesis; L-lysine biosynthesis via AAA pathway; L-lysine from L-alpha-aminoadipate (Thermus route): step 2/5. It functions in the pathway amino-acid biosynthesis; L-arginine biosynthesis. Functionally, involved in both the arginine and lysine biosynthetic pathways. Phosphorylates the LysW-bound precursors glutamate (for arginine biosynthesis), respectively alpha-aminoadipate (for lysine biosynthesis). In Pyrococcus abyssi (strain GE5 / Orsay), this protein is Putative [LysW]-aminoadipate/[LysW]-glutamate kinase.